We begin with the raw amino-acid sequence, 198 residues long: Glycerol-3-phosphate acyltransferase (198 aa).

Helical transmembrane passes span F6–L26, L56–I78, A83–L101, I113–A133, and F155–L175.

It belongs to the PlsY family. As to quaternary structure, probably interacts with PlsX.

The protein resides in the cell inner membrane. The enzyme catalyses an acyl phosphate + sn-glycerol 3-phosphate = a 1-acyl-sn-glycero-3-phosphate + phosphate. The protein operates within lipid metabolism; phospholipid metabolism. In terms of biological role, catalyzes the transfer of an acyl group from acyl-phosphate (acyl-PO(4)) to glycerol-3-phosphate (G3P) to form lysophosphatidic acid (LPA). This enzyme utilizes acyl-phosphate as fatty acyl donor, but not acyl-CoA or acyl-ACP. The polypeptide is Glycerol-3-phosphate acyltransferase (Bradyrhizobium diazoefficiens (strain JCM 10833 / BCRC 13528 / IAM 13628 / NBRC 14792 / USDA 110)).